Consider the following 186-residue polypeptide: UPF0301 protein HI_0304 (186 aa).

The protein belongs to the UPF0301 (AlgH) family.

The polypeptide is UPF0301 protein HI_0304 (Haemophilus influenzae (strain ATCC 51907 / DSM 11121 / KW20 / Rd)).